A 470-amino-acid polypeptide reads, in one-letter code: MFNRVQKEINQIINRGFDRTLRLAVTGLSRSGKTAFITSLINQLLSINQHSSQNLPLFEAARNGSILAVKRVSQQDLSVPRFDYESNLNDLSQNPPQWFQSTRGVSETRLAIRFQRQSGLLRHLKERGTLYLDIFDYPGEWLLDLPLLNLDFQQWSQEQIKVTTGVRAELAQNWLSMLQNLDLSAVANEDVLAKIAKSYTDYLHQCKAQGMQFIQPGRFVLPSDLEGAPALQFFPLIHLSGEHWQTLKKTAKSNSYFAVLTKRYNYYRNKIVKGFYENYFSTFDRQVILADCLTPLNHSQQAFLDMQMGLNQLFNNFHYGSRNFLHRLFSPQIDRLMFVATKADHITRDQIPNLVSLMRQIVQEGGRHVEFEGIDTEYTAIAAVRTTKQVIVNQQGKEIKAIQGVRSIDKQLITLYPGTVPSKLPKTEFWQKQPHFDFDSFEPQPLEQGESIPHLRMDAVLQFLLSDRFE.

A Walker A motif motif is present at residues 27–34; sequence GLSRSGKT. GTP is bound by residues Ser29, Gly32, Lys33, Thr34, Ala35, Trp98, Ser101, Thr102, Arg103, Lys342, Asp344, and His345. GDP contacts are provided by Gly32, Lys33, Thr34, Ala35, Trp98, Ser101, and Thr102. Residues Lys342, Asp344, His345, Ala383, and Val384 each coordinate GDP. Val384 serves as a coordination point for GTP.

It to E.coli YcjX. In terms of assembly, monomer in solution. Mg(2+) is required as a cofactor.

The enzyme catalyses GTP + H2O = GDP + phosphate + H(+). Its activity is regulated as follows. Alternates between an inactive form bound to GDP and an active form bound to GTP. Likely activated by a guanine nucleotide-exchange factor (GEF). Binds GTP and GDP. Has intrinsic GTPase activity. Does not hydrolyze ATP. May act as a transducer of stress responses. The sequence is that of Ras-like GTPase HI_1637 from Haemophilus influenzae (strain ATCC 51907 / DSM 11121 / KW20 / Rd).